Reading from the N-terminus, the 426-residue chain is Glutamate-1-semialdehyde 2,1-aminomutase (426 aa).

Lysine 265 is subject to N6-(pyridoxal phosphate)lysine.

It belongs to the class-III pyridoxal-phosphate-dependent aminotransferase family. HemL subfamily. In terms of assembly, homodimer. The cofactor is pyridoxal 5'-phosphate.

It localises to the cytoplasm. It carries out the reaction (S)-4-amino-5-oxopentanoate = 5-aminolevulinate. The protein operates within porphyrin-containing compound metabolism; protoporphyrin-IX biosynthesis; 5-aminolevulinate from L-glutamyl-tRNA(Glu): step 2/2. This Alcanivorax borkumensis (strain ATCC 700651 / DSM 11573 / NCIMB 13689 / SK2) protein is Glutamate-1-semialdehyde 2,1-aminomutase.